Reading from the N-terminus, the 335-residue chain is Adenosine deaminase (335 aa).

2 residues coordinate Zn(2+): H12 and H14. Residues H14 and D16 each coordinate substrate. Position 197 (H197) interacts with Zn(2+). The Proton donor role is filled by E200. A Zn(2+)-binding site is contributed by D278.

Belongs to the metallo-dependent hydrolases superfamily. Adenosine and AMP deaminases family. Adenosine deaminase subfamily. The cofactor is Zn(2+).

It catalyses the reaction adenosine + H2O + H(+) = inosine + NH4(+). It carries out the reaction 2'-deoxyadenosine + H2O + H(+) = 2'-deoxyinosine + NH4(+). In terms of biological role, catalyzes the hydrolytic deamination of adenosine and 2-deoxyadenosine. The sequence is that of Adenosine deaminase from Clostridium botulinum (strain Loch Maree / Type A3).